The following is a 291-amino-acid chain: MALAARLLPLPLLSRPLPGPVTRLRTLGSTEVRLTLTEICCLCRRRLGSSAAPIPRYTRAWTSPALRSWSSRRSLLGRVEHPPALASLPASPSRSYSTEEQPQQRQRTRMIILGFSNPINWVRTRIYAFLIWAYFDKEFSIAEFSEGAKQAFAYVSKLLSQCKFDLLEELVAKEVLQILKEKVTSLSDNHKNALAADIDDIVYTSTGDISIYYDEKGRKFVNILMCFWYLTSANIPSESLSGANVFQVKLGDQSVETKQLLSASYEFQREFTQGVKPDWTIARIEHSKLLE.

The transit peptide at 1-96 (MALAARLLPL…SLPASPSRSY (96 aa)) directs the protein to the mitochondrion.

In terms of assembly, interacts with AFG3L2. Interacts with SPG7. Interacts with SMDT1/EMRE (via the N-terminal transit peptide); interaction is direct and takes place before maturation of SMDT1/EMRE.

It is found in the mitochondrion matrix. Functionally, promotes sorting of SMDT1/EMRE in mitochondria by ensuring its maturation. Interacts with the transit peptide region of SMDT1/EMRE precursor protein in the mitochondrial matrix, leading to protect it against protein degradation by YME1L1, thereby ensuring SMDT1/EMRE maturation by the mitochondrial processing peptidase (PMPCA and PMPCB). The polypeptide is m-AAA protease-interacting protein 1, mitochondrial (Mus musculus (Mouse)).